Reading from the N-terminus, the 154-residue chain is 6,7-dimethyl-8-ribityllumazine synthase (154 aa).

Residues 22–23 (FN), 56–58 (AFE), and 80–82 (TVI) each bind 5-amino-6-(D-ribitylamino)uracil. 85 to 86 (AT) provides a ligand contact to (2S)-2-hydroxy-3-oxobutyl phosphate. The active-site Proton donor is His88. Phe113 is a binding site for 5-amino-6-(D-ribitylamino)uracil. Position 127 (Arg127) interacts with (2S)-2-hydroxy-3-oxobutyl phosphate.

Belongs to the DMRL synthase family. Forms an icosahedral capsid composed of 60 subunits, arranged as a dodecamer of pentamers. Can interact with riboflavin synthase, forming a lumazine synthase/riboflavin synthase complex, also designated as 'heavy riboflavin synthase complex', which consists of a trimer of riboflavin synthase enclosed within the icosahedral structure composed of 60 subunits of 6,7-dimethyl-8-ribityllumazine synthase.

The enzyme catalyses (2S)-2-hydroxy-3-oxobutyl phosphate + 5-amino-6-(D-ribitylamino)uracil = 6,7-dimethyl-8-(1-D-ribityl)lumazine + phosphate + 2 H2O + H(+). The protein operates within cofactor biosynthesis; riboflavin biosynthesis; riboflavin from 2-hydroxy-3-oxobutyl phosphate and 5-amino-6-(D-ribitylamino)uracil: step 1/2. Functionally, catalyzes the formation of 6,7-dimethyl-8-ribityllumazine by condensation of 5-amino-6-(D-ribitylamino)uracil with 3,4-dihydroxy-2-butanone 4-phosphate. This is the penultimate step in the biosynthesis of riboflavin. Is able to use the non-natural R enantiomer of 3,4-dihydroxy-2-butanone 4-phosphate as a substrate, but with less efficiency than the natural S enantiomer. Cannot use unphosphorylated 3,4-dihydroxy-2-butanone, 3,4-dihydroxy-2-butanone 3-phosphate or diacetyl as substrates. In Bacillus subtilis (strain 168), this protein is 6,7-dimethyl-8-ribityllumazine synthase (ribH).